Consider the following 1221-residue polypeptide: DNA-directed RNA polymerase subunit beta (1221 aa).

The tract at residues Glu-1176–Lys-1221 is disordered. Positions Glu-1183 to Asp-1215 are enriched in acidic residues.

The protein belongs to the RNA polymerase beta chain family. In terms of assembly, the RNAP catalytic core consists of 2 alpha, 1 beta, 1 beta' and 1 omega subunit. When a sigma factor is associated with the core the holoenzyme is formed, which can initiate transcription.

The enzyme catalyses RNA(n) + a ribonucleoside 5'-triphosphate = RNA(n+1) + diphosphate. In terms of biological role, DNA-dependent RNA polymerase catalyzes the transcription of DNA into RNA using the four ribonucleoside triphosphates as substrates. This is DNA-directed RNA polymerase subunit beta from Lactobacillus delbrueckii subsp. bulgaricus (strain ATCC BAA-365 / Lb-18).